Here is a 285-residue protein sequence, read N- to C-terminus: Urease accessory protein UreD (285 aa).

The protein belongs to the UreD family. In terms of assembly, ureD, UreF and UreG form a complex that acts as a GTP-hydrolysis-dependent molecular chaperone, activating the urease apoprotein by helping to assemble the nickel containing metallocenter of UreC. The UreE protein probably delivers the nickel.

The protein resides in the cytoplasm. Its function is as follows. Required for maturation of urease via the functional incorporation of the urease nickel metallocenter. This is Urease accessory protein UreD from Azoarcus sp. (strain BH72).